The primary structure comprises 1648 residues: Cortactin-binding protein 2 (1648 aa).

Disordered regions lie at residues 1 to 26 (MATD…TAEA), 200 to 250 (EEKK…EEAH), 322 to 439 (PLTV…PGLN), 451 to 476 (GNAN…PTSR), and 492 to 608 (ALSR…PSID). Residues 119-274 (KMQERMSAQL…MEQMKKGSDG (156 aa)) are a coiled coil. Basic and acidic residues-rich tracts occupy residues 200–218 (EEKK…EKQR) and 225–250 (QLEK…EEAH). 2 stretches are compositionally biased toward polar residues: residues 330 to 342 (STGS…NTKG) and 372 to 392 (LPSS…APDL). The segment covering 393 to 415 (SNSTPSTPSSTAPAAAQTPGTAP) has biased composition (low complexity). Positions 492-503 (ALSRFTSPQAGA) are enriched in polar residues. Arg495 is modified (asymmetric dimethylarginine). ANK repeat units lie at residues 699-729 (GRPT…DINY), 733-762 (DGHS…RVDA), 766-795 (NGFT…NINH), 799-828 (GGQT…DRSI), 832-861 (DGWT…RAHG), and 901-931 (EGWT…EPER). The tract at residues 1438–1492 (SGAWRKVNTSPRKKPGHFSSPTWNKPDPKREGMRNKTIPHLNTNRNSSLSKQQSL) is disordered. Polar residues predominate over residues 1477-1492 (HLNTNRNSSLSKQQSL). Ser1510 is subject to Phosphoserine. The interval 1522–1648 (SMCSSKSESD…KHEQVEKPNK (127 aa)) is disordered. Residues 1528-1547 (SESDISKIADSRDDLRKFDS) show a composition bias toward basic and acidic residues. Composition is skewed to polar residues over residues 1548 to 1557 (SRTNPGTSAP) and 1571 to 1584 (PPSS…SNSK). The segment covering 1609–1623 (SQNTKRNSSSSNTRQ) has biased composition (low complexity). The span at 1630 to 1648 (SKEENWTLDKHEQVEKPNK) shows a compositional bias: basic and acidic residues.

Interacts with CTTN/cortactin SH3 domain. Interacts with STRN, STRN4/zinedin and MOB4/phocein; this interactions mediate the association with the STRIPAK core complex and may regulate dendritic spine distribution of the STRIPAK complex in hippocampal neurons. Activation of glutamate receptors weakens the interaction with STRN and STRN4. In terms of tissue distribution, isoform 2 is predominantly expressed in brain (at protein level). In the brain, expressed at high levels in hypothalamus and striatum and at lower levels in cerebellum and cortex.

It is found in the cytoplasm. The protein resides in the cell cortex. The protein localises to the cell projection. It localises to the dendritic spine. In terms of biological role, regulates the dendritic spine distribution of CTTN/cortactin in hippocampal neurons, and thus controls dendritic spinogenesis and dendritic spine maintenance. Associates with the striatin-interacting phosphatase and kinase (STRIPAK) core complex to regulate dendritic spine distribution of the STRIPAK complex in hippocampal neurons. The sequence is that of Cortactin-binding protein 2 (Cttnbp2) from Mus musculus (Mouse).